Reading from the N-terminus, the 156-residue chain is 6,7-dimethyl-8-ribityllumazine synthase (156 aa).

5-amino-6-(D-ribitylamino)uracil contacts are provided by residues Phe23, Ala57–Glu59, and Ala81–Ile83. Ser86 to Thr87 is a binding site for (2S)-2-hydroxy-3-oxobutyl phosphate. The Proton donor role is filled by His89. Phe114 contributes to the 5-amino-6-(D-ribitylamino)uracil binding site. Residue Arg128 participates in (2S)-2-hydroxy-3-oxobutyl phosphate binding.

The protein belongs to the DMRL synthase family.

The enzyme catalyses (2S)-2-hydroxy-3-oxobutyl phosphate + 5-amino-6-(D-ribitylamino)uracil = 6,7-dimethyl-8-(1-D-ribityl)lumazine + phosphate + 2 H2O + H(+). Its pathway is cofactor biosynthesis; riboflavin biosynthesis; riboflavin from 2-hydroxy-3-oxobutyl phosphate and 5-amino-6-(D-ribitylamino)uracil: step 1/2. Functionally, catalyzes the formation of 6,7-dimethyl-8-ribityllumazine by condensation of 5-amino-6-(D-ribitylamino)uracil with 3,4-dihydroxy-2-butanone 4-phosphate. This is the penultimate step in the biosynthesis of riboflavin. This is 6,7-dimethyl-8-ribityllumazine synthase from Campylobacter hominis (strain ATCC BAA-381 / DSM 21671 / CCUG 45161 / LMG 19568 / NCTC 13146 / CH001A).